We begin with the raw amino-acid sequence, 55 residues long: Large ribosomal subunit protein bL33 (55 aa).

Belongs to the bacterial ribosomal protein bL33 family.

The protein is Large ribosomal subunit protein bL33 of Pseudarthrobacter chlorophenolicus (strain ATCC 700700 / DSM 12829 / CIP 107037 / JCM 12360 / KCTC 9906 / NCIMB 13794 / A6) (Arthrobacter chlorophenolicus).